The primary structure comprises 250 residues: Endonuclease NucS 2 (250 aa).

It belongs to the NucS endonuclease family.

The protein resides in the cytoplasm. Functionally, cleaves both 3' and 5' ssDNA extremities of branched DNA structures. The protein is Endonuclease NucS 2 of Halobacterium salinarum (strain ATCC 700922 / JCM 11081 / NRC-1) (Halobacterium halobium).